Consider the following 188-residue polypeptide: Large ribosomal subunit protein eL18 (188 aa).

Positions 143–188 (RSAREAEKHFGPAPGVPHSHTKPHVRSKGRKFERARGRRASRAYKN) are disordered. Basic residues-rich tracts occupy residues 161–171 (SHTKPHVRSKG) and 178–188 (RGRRASRAYKN).

This sequence belongs to the eukaryotic ribosomal protein eL18 family.

The protein localises to the cytoplasm. This chain is Large ribosomal subunit protein eL18 (rpl-18), found in Caenorhabditis briggsae.